We begin with the raw amino-acid sequence, 459 residues long: NADP-specific glutamate dehydrogenase (459 aa).

The active site involves Lys-116.

Belongs to the Glu/Leu/Phe/Val dehydrogenases family. Homohexamer.

It catalyses the reaction L-glutamate + NADP(+) + H2O = 2-oxoglutarate + NH4(+) + NADPH + H(+). The chain is NADP-specific glutamate dehydrogenase (GDHA) from Schwanniomyces occidentalis (Yeast).